A 66-amino-acid chain; its full sequence is Large ribosomal subunit protein bL33c (66 aa).

Belongs to the bacterial ribosomal protein bL33 family.

Its subcellular location is the plastid. The protein localises to the chloroplast. This is Large ribosomal subunit protein bL33c from Solanum bulbocastanum (Wild potato).